Reading from the N-terminus, the 99-residue chain is U1-theraphotoxin-Lsp1c (99 aa).

An N-terminal signal peptide occupies residues 1 to 23 (MRKITIRALLLCSLLLVFHTSAA). A propeptide spanning residues 24 to 50 (AELQAQEGHLMIPGDTDTALETVDDER) is cleaved from the precursor. 4 disulfides stabilise this stretch: C54-C67, C58-C91, C72-C74, and C85-C96.

Belongs to the neurotoxin 12 (Hwtx-2) family. 04 (lasiotoxin) subfamily. Expressed by the venom gland.

The protein localises to the secreted. In terms of biological role, toxin that causes irreversible contractile paralysis into adult Aedes aegypti resulting in 100% mortality after 24 hours. In Lasiodora sp. (strain IBSP 8539) (Brazilian salmon pink birdeater), this protein is U1-theraphotoxin-Lsp1c.